A 244-amino-acid polypeptide reads, in one-letter code: Claudin-12 (244 aa).

Topologically, residues 1-10 (MGCRDVHAAT) are cytoplasmic. The chain crosses the membrane as a helical span at residues 11–31 (VLSFLCGIASVAGLFAGTLLP). Residues 32–87 (NWRKLRLITFNRNEKNLTVYTGLWVKCARYDGSSDCLMYDTTWYSSVDQLDLRVLQ) are Extracellular-facing. Residues 88–108 (FALPLSMLIAMGALLLCLIGM) form a helical membrane-spanning segment. At 109–135 (CNTAFRSSVPNIKLAKCLVNSAGCHLV) the chain is on the cytoplasmic side. A helical membrane pass occupies residues 136 to 156 (AGLLFFLAGTVSLSPSIWVIF). Residues 157–174 (YNIHLNKKFEPVFSFDYA) are Extracellular-facing. The helical transmembrane segment at 175–195 (VYVTIASAGGLFMTSLILFIW) threads the bilayer. Over 196 to 244 (YCTCKSLPSPFWQPLYSHPPSMHTYSQPYSARSRLSAIEIDIPVVSHTT) the chain is Cytoplasmic. Phosphoserine occurs at positions 228 and 231.

It belongs to the claudin family. As to quaternary structure, interacts with OCLN.

It is found in the cell junction. The protein localises to the tight junction. The protein resides in the cell membrane. In terms of biological role, plays a major role in tight junction-specific obliteration of the intercellular space, through calcium-independent cell-adhesion activity. The chain is Claudin-12 (CLDN12) from Pongo abelii (Sumatran orangutan).